The sequence spans 149 residues: Inner membrane protein YdcZ (149 aa).

At 1–4 (MNQS) the chain is on the periplasmic side. A helical transmembrane segment spans residues 5-25 (LTLAFLIAAGIGLVVQNTLMV). At 26-33 (RITQTSST) the chain is on the cytoplasmic side. The helical transmembrane segment at 34 to 54 (ILIAMLLNSLVGIVLFVSILW) threads the bilayer. Residues 55–70 (FKQGMAGFGELVSSVR) lie on the Periplasmic side of the membrane. A helical membrane pass occupies residues 71 to 91 (WWTLIPGLLGSFFVFASISGY). The Cytoplasmic segment spans residues 92–93 (QN). A helical transmembrane segment spans residues 94–114 (VGAATTIAVLVASQLIGGLML). Topologically, residues 115-123 (DIFRSHGVP) are periplasmic. A helical transmembrane segment spans residues 124–144 (LRALFGPICGAILLVVGAWLV). Residues 145–149 (ARRSF) are Cytoplasmic-facing.

It is found in the cell inner membrane. The polypeptide is Inner membrane protein YdcZ (ydcZ) (Escherichia coli (strain K12)).